A 131-amino-acid chain; its full sequence is Translation initiation factor 5A (131 aa).

Lys-37 is modified (hypusine).

Belongs to the eIF-5A family.

Its subcellular location is the cytoplasm. Its function is as follows. Functions by promoting the formation of the first peptide bond. This chain is Translation initiation factor 5A (eIF5A), found in Methanococcus maripaludis (strain C7 / ATCC BAA-1331).